Reading from the N-terminus, the 604-residue chain is Nuclear cap-binding protein subunit 3 (604 aa).

The interval 1-36 (MAAVRGLRISVKAEATATTAEPRGPEPEPMEVEEGE) is disordered. The tract at residues 116–177 (DTIYICGVDE…MSSFPDQEKP (62 aa)) is RNA recognition motif (RRM) domain. The short motif at 145-148 (WLDD) is the WLDD motif; essential for 7-methylguanosine-containing mRNA cap binding element. 3 disordered regions span residues 168 to 219 (MSSF…DIEL), 319 to 383 (KHRH…DSDE), and 457 to 604 (QNNN…DTES). The span at 173–198 (DQEKPKGGENNEEKTAEKNKKEKQEE) shows a compositional bias: basic and acidic residues. Composition is skewed to acidic residues over residues 199-219 (STDD…DIEL) and 331-349 (EPIE…DEDD). Over residues 350–370 (RVVVEYRDDLQPFKQSRDRGA) the composition is skewed to basic and acidic residues. Residues 458-469 (NNNGLRQPNSIV) show a composition bias toward polar residues. Composition is skewed to basic and acidic residues over residues 495 to 505 (PRREPISDVHS), 539 to 548 (TQEKTSDKPE), and 569 to 582 (IKEK…KSRL). Low complexity predominate over residues 595-604 (ESSSGSDTES).

It belongs to the NCBP3 family. Component of an alternative cap-binding complex (CBC) composed of NCBP1/CBP80 and NCBP3.

The protein resides in the nucleus. The protein localises to the cytoplasm. Functionally, associates with NCBP1/CBP80 to form an alternative cap-binding complex (CBC) which plays a key role in mRNA export. NCBP3 serves as adapter protein linking the capped RNAs (m7GpppG-capped RNA) to NCBP1/CBP80. Unlike the conventional CBC with NCBP2 which binds both small nuclear RNA (snRNA) and messenger (mRNA) and is involved in their export from the nucleus, the alternative CBC with NCBP3 does not bind snRNA and associates only with mRNA thereby playing a role in only mRNA export. In Gallus gallus (Chicken), this protein is Nuclear cap-binding protein subunit 3.